The primary structure comprises 225 residues: NAD(P)H-quinone oxidoreductase subunit K, chloroplastic (225 aa).

The [4Fe-4S] cluster site is built by Cys43, Cys44, Cys108, and Cys139.

The protein belongs to the complex I 20 kDa subunit family. As to quaternary structure, NDH is composed of at least 16 different subunits, 5 of which are encoded in the nucleus. The cofactor is [4Fe-4S] cluster.

The protein resides in the plastid. It localises to the chloroplast thylakoid membrane. The enzyme catalyses a plastoquinone + NADH + (n+1) H(+)(in) = a plastoquinol + NAD(+) + n H(+)(out). The catalysed reaction is a plastoquinone + NADPH + (n+1) H(+)(in) = a plastoquinol + NADP(+) + n H(+)(out). Functionally, NDH shuttles electrons from NAD(P)H:plastoquinone, via FMN and iron-sulfur (Fe-S) centers, to quinones in the photosynthetic chain and possibly in a chloroplast respiratory chain. The immediate electron acceptor for the enzyme in this species is believed to be plastoquinone. Couples the redox reaction to proton translocation, and thus conserves the redox energy in a proton gradient. The polypeptide is NAD(P)H-quinone oxidoreductase subunit K, chloroplastic (Nymphaea alba (White water-lily)).